We begin with the raw amino-acid sequence, 319 residues long: Coproporphyrin III ferrochelatase (319 aa).

Fe(2+) is bound by residues His-193 and Glu-274.

The protein belongs to the ferrochelatase family.

It is found in the cytoplasm. The catalysed reaction is Fe-coproporphyrin III + 2 H(+) = coproporphyrin III + Fe(2+). The protein operates within porphyrin-containing compound metabolism; protoheme biosynthesis. Involved in coproporphyrin-dependent heme b biosynthesis. Catalyzes the insertion of ferrous iron into coproporphyrin III to form Fe-coproporphyrin III. The chain is Coproporphyrin III ferrochelatase from Streptococcus mutans serotype c (strain ATCC 700610 / UA159).